We begin with the raw amino-acid sequence, 523 residues long: MRRRATILADLQQHGDKISFKPGDNNKSKLTVSVNAPRQDRFSAPVSNADLDVLNHVADVSVAWGRPSAAQQPVLFAAAYEPGLHVTVVKKQASEPRKWGEEKPSEAAPELVHVAKFLEEQLGLPVDPKTFIESRSDYTYYDPLVGPEAFGHFVDKHSACSDESEEFVNDLDTFNYAQSASFHIDHDKKELVTEVTIPDLEHYFNQKKQHISRACKNDRLEVGIFDLNNLATSYAFRGVAELKGLLHDSTKEKPQETFLVIEPRHNIGAGSVSVDFERPVGLHPKSELKLRHIAIPTDHNDENDGVKHCRLFAKYSAPSSIFFDKYQLADLERTTSEHPNGQGRLLALWGEADLEEPRYHTEGWGSEALVEIFPITDAPEGTPFNLNFTLPLHLRYEEPKEGETYEPNEAPWPLVFWVCAETDEQLANFKQSPFDVTHNSYMRLFPEGVSYHHIGPREANGRGFPLLSTSWGTPVADIDRFAAVRDYTSIMMVAGFLMVTIAILRKVFRGKAMSEELKEKKEQ.

Residues 1-486 (MRRRATILAD…DIDRFAAVRD (486 aa)) lie on the Lumenal side of the membrane. Residues Asn-26 and Asn-387 are each glycosylated (N-linked (GlcNAc...) asparagine). The chain crosses the membrane as a helical span at residues 487-504 (YTSIMMVAGFLMVTIAIL). Topologically, residues 505-523 (RKVFRGKAMSEELKEKKEQ) are cytoplasmic.

This sequence belongs to the PIGX family.

The protein localises to the endoplasmic reticulum membrane. The protein operates within glycolipid biosynthesis; glycosylphosphatidylinositol-anchor biosynthesis. Its function is as follows. Required for proper folding and/or the stability of a subset of proteins in the endoplasmic reticulum. Component of glycosylphosphatidylinositol-mannosyltransferase 1 which transfers the first of the 4 mannoses in the GPI-anchor precursors during GPI-anchor biosynthesis. Probably acts by stabilizing the mannosyltransferase GPI14. This is Protein PBN1 (PBN1) from Yarrowia lipolytica (strain CLIB 122 / E 150) (Yeast).